Reading from the N-terminus, the 221-residue chain is Octanoyltransferase (221 aa).

In terms of domain architecture, BPL/LPL catalytic spans 29 to 208 (DEIPDTCLLL…RLTEFLLPAR (180 aa)). Substrate-binding positions include 67-74 (RGGRITWH), 138-140 (AIG), and 151-153 (GFA). C169 (acyl-thioester intermediate) is an active-site residue.

This sequence belongs to the LipB family.

It localises to the cytoplasm. The enzyme catalyses octanoyl-[ACP] + L-lysyl-[protein] = N(6)-octanoyl-L-lysyl-[protein] + holo-[ACP] + H(+). Its pathway is protein modification; protein lipoylation via endogenous pathway; protein N(6)-(lipoyl)lysine from octanoyl-[acyl-carrier-protein]: step 1/2. Catalyzes the transfer of endogenously produced octanoic acid from octanoyl-acyl-carrier-protein onto the lipoyl domains of lipoate-dependent enzymes. Lipoyl-ACP can also act as a substrate although octanoyl-ACP is likely to be the physiological substrate. This Acidothermus cellulolyticus (strain ATCC 43068 / DSM 8971 / 11B) protein is Octanoyltransferase.